Reading from the N-terminus, the 286-residue chain is CBY1-interacting BAR domain-containing protein 1 (286 aa).

The N-terminal 47 residues, 1–47 (MLRRNLDERDAQTKQLQDAVTNVEKHFGELCQIFAAYVRKTARLRDK), are a transit peptide targeting the mitochondrion. Positions 10-220 (DAQTKQLQDA…NIDEDEDLEV (211 aa)) are BAR-like. Residues 107 to 178 (KMKRDDLKAT…IDNFEKQKIK (72 aa)) are a coiled coil. A disordered region spans residues 258-286 (GQISTCRTRKDQQVEDEDDEELDVTEDEN). A compositionally biased stretch (acidic residues) spans 271–286 (VEDEDDEELDVTEDEN).

It belongs to the CIBAR family. In terms of assembly, homodimer (via BAR-like domain). Heterodimer with FAM92B (via BAR-like domains). Interacts (via BAR-like domain) with CBY1; this interaction is required for targeting FAM92A to centriole and cilium basal body. Interacts (via BAR-like domain) with CBY3; both proteins form a ninefold symmetric structure at the flagellar base; are recruited to the annulus in a mutually dependent manner and regulate annulus positionning. Expressed in the heart, liver, spleen, lung, kidney, brain and muscle (at protein level). Strongly expressed throughout the developing limb bud, including the progress zone and the apical ectodermal ridge.

It localises to the cytoplasm. It is found in the cytoskeleton. The protein resides in the microtubule organizing center. The protein localises to the centrosome. Its subcellular location is the centriole. It localises to the cilium basal body. It is found in the cell projection. The protein resides in the cilium. The protein localises to the nucleus. Its subcellular location is the mitochondrion inner membrane. It localises to the flagellum. Its function is as follows. Plays a critical role in regulating mitochondrial ultrastructure and function by maintaining the integrity of mitochondrial morphology, particularly the organization of cristae. Preferentially binds to negatively charged phospholipids like cardiolipin and phosphatidylinositol 4,5-bisphosphate enhancing its interaction with mitochondrial membranes. Induces membrane curvature and tubulation, which are critical for maintaining mitochondrial ultrastructure and the organization of cristae. Plays a crucial role in ciliogenesis. May play a role in limb development through its role in ciliogenesis. Plays a key role in the correct positioning of the annulus, a septin-based ring structure in the sperm flagellum, serving both as a physical barrier and a membrane diffusion barrier that separates the midpiece (MP) from the principal piece (PP). This positioning is essential for proper sperm motility and function. Interacts with CBY3 to form a complex which localizes to the curved membrane region of the flagellar pocket. By doing so, may provide stability and rigidity to the periannular membrane to prevent membrane deformation. This function is crucial for halting annulus migration at the proximal end of the fibrous sheath-containing PP. In Mus musculus (Mouse), this protein is CBY1-interacting BAR domain-containing protein 1.